The following is a 325-amino-acid chain: Fructose-1,6-bisphosphatase class 1 (325 aa).

Mg(2+) contacts are provided by Glu84, Asp103, Leu105, and Asp106. Residues 106–109, Asn196, and Lys262 contribute to the substrate site; that span reads DGSS. Glu268 is a Mg(2+) binding site.

Belongs to the FBPase class 1 family. Homotetramer. It depends on Mg(2+) as a cofactor.

Its subcellular location is the cytoplasm. It catalyses the reaction beta-D-fructose 1,6-bisphosphate + H2O = beta-D-fructose 6-phosphate + phosphate. It functions in the pathway carbohydrate biosynthesis; gluconeogenesis. This Shewanella oneidensis (strain ATCC 700550 / JCM 31522 / CIP 106686 / LMG 19005 / NCIMB 14063 / MR-1) protein is Fructose-1,6-bisphosphatase class 1.